The primary structure comprises 413 residues: Putative adhesin P1-like protein MPN_144 (413 aa).

Composition is skewed to polar residues over residues 1–13, 25–54, and 355–376; these read MGQQ…SAGN, SGDS…NLTP, and SFGT…VFGT. Disordered regions lie at residues 1 to 60 and 355 to 413; these read MGQQ…DWPN and SFGT…VSGH. Over residues 385–399 the composition is skewed to gly residues; the sequence is LSGGGAGGGSSGSGQ.

This sequence belongs to the adhesin P1 family.

In Mycoplasma pneumoniae (strain ATCC 29342 / M129 / Subtype 1) (Mycoplasmoides pneumoniae), this protein is Putative adhesin P1-like protein MPN_144.